We begin with the raw amino-acid sequence, 75 residues long: uncharacterized protein (75 aa).

The chain crosses the membrane as a helical span at residues 49-69; it reads VDIVAVATTLPFIVAVICIVF.

The protein resides in the host membrane. This is an uncharacterized protein from Saccharolobus islandicus (Sulfolobus islandicus).